The chain runs to 190 residues: Protein LZIC (190 aa).

A coiled-coil region spans residues 2–63 (ASRGKTETSK…SEFNDSLKKI (62 aa)).

It belongs to the CTNNBIP1 family. As to quaternary structure, does not interact with CTNNB1.

This Mus musculus (Mouse) protein is Protein LZIC (Lzic).